A 1380-amino-acid chain; its full sequence is DNA-directed RNA polymerase subunit beta (1380 aa).

Belongs to the RNA polymerase beta chain family. The RNAP catalytic core consists of 2 alpha, 1 beta, 1 beta' and 1 omega subunit. When a sigma factor is associated with the core the holoenzyme is formed, which can initiate transcription.

It carries out the reaction RNA(n) + a ribonucleoside 5'-triphosphate = RNA(n+1) + diphosphate. Its function is as follows. DNA-dependent RNA polymerase catalyzes the transcription of DNA into RNA using the four ribonucleoside triphosphates as substrates. This chain is DNA-directed RNA polymerase subunit beta, found in Rhizobium rhizogenes (strain K84 / ATCC BAA-868) (Agrobacterium radiobacter).